We begin with the raw amino-acid sequence, 320 residues long: Acyl-coenzyme A thioesterase 8 (320 aa).

Catalysis depends on charge relay system residues D233, S255, and Q305. The Microbody targeting signal signature appears at 318-320 (SKL).

It belongs to the C/M/P thioester hydrolase family. In terms of assembly, homodimer.

Its subcellular location is the peroxisome matrix. It carries out the reaction choloyl-CoA + H2O = cholate + CoA + H(+). The enzyme catalyses chenodeoxycholoyl-CoA + H2O = chenodeoxycholate + CoA + H(+). The catalysed reaction is acetyl-CoA + H2O = acetate + CoA + H(+). It catalyses the reaction butanoyl-CoA + H2O = butanoate + CoA + H(+). It carries out the reaction hexanoyl-CoA + H2O = hexanoate + CoA + H(+). The enzyme catalyses octanoyl-CoA + H2O = octanoate + CoA + H(+). The catalysed reaction is decanoyl-CoA + H2O = decanoate + CoA + H(+). It catalyses the reaction dodecanoyl-CoA + H2O = dodecanoate + CoA + H(+). It carries out the reaction tetradecanoyl-CoA + H2O = tetradecanoate + CoA + H(+). The enzyme catalyses 4,8-dimethylnonanoyl-CoA + H2O = 4,8-dimethylnonanoate + CoA + H(+). The catalysed reaction is 2,6-dimethylheptanoyl-CoA + H2O = 2,6-dimethylheptanoate + CoA + H(+). It catalyses the reaction malonyl-CoA + H2O = malonate + CoA + H(+). It carries out the reaction acetoacetyl-CoA + H2O = acetoacetate + CoA + H(+). The enzyme catalyses propanoyl-CoA + H2O = propanoate + CoA + H(+). The catalysed reaction is succinyl-CoA + H2O = succinate + CoA + H(+). It catalyses the reaction glutaryl-CoA + H2O = glutarate + CoA + H(+). It carries out the reaction hexanedioyl-CoA + H2O = hexanedioate + CoA + H(+). The enzyme catalyses octanedioyl-CoA + H2O = octanedioate + CoA + H(+). The catalysed reaction is decanedioyl-CoA + H2O = decanedioate + CoA + H(+). It catalyses the reaction dodecanedioyl-CoA + H2O = dodecanedioate + CoA + H(+). It carries out the reaction (9Z)-tetradecenoyl-CoA + H2O = (9Z)-tetradecenoate + CoA + H(+). The enzyme catalyses hexadecanoyl-CoA + H2O = hexadecanoate + CoA + H(+). The catalysed reaction is (9Z)-hexadecenoyl-CoA + H2O = (9Z)-hexadecenoate + CoA + H(+). It catalyses the reaction octadecanoyl-CoA + H2O = octadecanoate + CoA + H(+). It carries out the reaction (9Z)-octadecenoyl-CoA + H2O = (9Z)-octadecenoate + CoA + H(+). The enzyme catalyses (9Z,12Z)-octadecadienoyl-CoA + H2O = (9Z,12Z)-octadecadienoate + CoA + H(+). The catalysed reaction is eicosanoyl-CoA + H2O = eicosanoate + CoA + H(+). It catalyses the reaction (5Z,8Z,11Z,14Z)-eicosatetraenoyl-CoA + H2O = (5Z,8Z,11Z,14Z)-eicosatetraenoate + CoA + H(+). It carries out the reaction (3S)-3-hydroxy-3-methylglutaryl-CoA + H2O = 3-hydroxy-3-methylglutarate + CoA + H(+). The enzyme catalyses 3alpha,7alpha,12alpha-trihydroxy-5beta-cholestan-26-oyl-CoA + H2O = 3alpha,7alpha,12alpha-trihydroxy-5beta-cholestan-26-oate + CoA + H(+). The catalysed reaction is 2-methyloctadecanoyl-CoA + H2O = 2-methyloctadecanoate + CoA + H(+). It catalyses the reaction prostaglandin F2alpha-CoA + H2O = prostaglandin F2alpha + CoA + H(+). With respect to regulation, inhibited by CoASH (IC(50)=10-15 uM). Also inhibited by cysteine-reactive agents. In terms of biological role, catalyzes the hydrolysis of acyl-CoAs into free fatty acids and coenzyme A (CoASH), regulating their respective intracellular levels. Displays no strong substrate specificity with respect to the carboxylic acid moiety of Acyl-CoAs. Hydrolyzes medium length (C2 to C20) straight-chain, saturated and unsaturated acyl-CoAS but is inactive towards substrates with longer aliphatic chains. Moreover, it catalyzes the hydrolysis of CoA esters of bile acids, such as choloyl-CoA and chenodeoxycholoyl-CoA and competes with bile acid CoA:amino acid N-acyltransferase (BAAT). Is also able to hydrolyze CoA esters of dicarboxylic acids. It is involved in the metabolic regulation of peroxisome proliferation. In Rattus norvegicus (Rat), this protein is Acyl-coenzyme A thioesterase 8 (Acot8).